A 284-amino-acid chain; its full sequence is NADH-cytochrome b5 reductase 1 (284 aa).

Residues 8 to 28 (PLVIFSTLAAIILAAVAVYVV) form a helical membrane-spanning segment. In terms of domain architecture, FAD-binding FR-type spans 41–144 (DVFQKFPLIE…RGPKGFFTYT (104 aa)). FAD contacts are provided by residues 124-139 (DSKSVGDHIEVRGPKG) and 150-182 (HLGMIAGGTGIAPMYQVLTAILTNPDDKTKISL).

This sequence belongs to the flavoprotein pyridine nucleotide cytochrome reductase family. As to quaternary structure, monomer. Component of the 2-(3-amino-3-carboxypropyl)histidine synthase complex composed of DPH1, DPH2, DPH3 and a NADH-dependent reductase, predominantly CBR1. FAD serves as cofactor.

Its subcellular location is the mitochondrion outer membrane. It catalyses the reaction 2 Fe(III)-[cytochrome b5] + NADH = 2 Fe(II)-[cytochrome b5] + NAD(+) + H(+). The enzyme catalyses 2 Fe(3+)-[Dph3] + NADH = 2 Fe(2+)-[Dph3] + NAD(+) + H(+). The protein operates within protein modification; peptidyl-diphthamide biosynthesis. Its function is as follows. NADH-dependent reductase for DPH3 and cytochrome b5. Required for the first step of diphthamide biosynthesis, a post-translational modification of histidine which occurs in elongation factor 2. DPH1 and DPH2 transfer a 3-amino-3-carboxypropyl (ACP) group from S-adenosyl-L-methionine (SAM) to a histidine residue, the reaction is assisted by a reduction system comprising DPH3 and a NADH-dependent reductase, predominantly CBR1. By reducing DPH3, also involved in the formation of the tRNA wobble base modification mcm5s 2U (5-methoxycarbonylmethyl-2-thiouridine), mediated by the elongator complex. The cytochrome b5/NADH cytochrome b5 reductase electron transfer system supports the catalytic activity of several sterol biosynthetic enzymes. The polypeptide is NADH-cytochrome b5 reductase 1 (CBR1) (Meyerozyma guilliermondii (strain ATCC 6260 / CBS 566 / DSM 6381 / JCM 1539 / NBRC 10279 / NRRL Y-324) (Yeast)).